Consider the following 678-residue polypeptide: MADSNMDAGTTTSEMVAEEVSLFSTTDVILFSLIVGVMTYWFLFRKKKEEVPEFTKIQTTTSSVKDRSFVEKMKKTGRNIIVFYGSQTGTAEEFANRLSKDAHRYGMRGMAADPEEYDLADLSSLPEIEKALAIFCMATYGEGDPTDNAQDFYDWLQETDVDLSGVKYAVFALGNKTYEHFNAMGKYVDKRLEQLGAQRIFDLGLGDDDGNLEEDFITWREQFWPAVCEHFGVEATGEESSIRQYELMVHTDMDMAKVYTGEMGRLKSYENQKPPFDAKNPFLAVVTTNRKLNQGTERHLMHLELDISDSKIRYESGDHVAVYPANDSALVNQLGEILGADLDIIMSLNNLDEESNKKHPFPCPTSYRTALTYYLDITNPPRTNVLYELAQYASEPTEHEQLRKMASSSGEGKELYLRWVLEARRHILAILQDYPSLRPPIDHLCELLPRLQARYYSIASSSKVHPNSVHICAVAVEYETKTGRINKGVATSWLRAKEPAGENGGRALVPMYVRKSQFRLPFKATTPVIMVGPGTGVAPFIGFIQERAWLRQQGKEVGETLLYYGCRRSDEDYLYREELAGFHKDGALTQLNVAFSREQPQKVYVQHLLKKDKEHLWKLIHEGGAHIYVCGDARNMARDVQNTFYDIVAEQGAMEHAQAVDYVKKLMTKGRYSLDVWS.

Topologically, residues 1-21 (MADSNMDAGTTTSEMVAEEVS) are lumenal. The helical transmembrane segment at 22–42 (LFSTTDVILFSLIVGVMTYWF) threads the bilayer. Residues 43-678 (LFRKKKEEVP…KGRYSLDVWS (636 aa)) lie on the Cytoplasmic side of the membrane. Phosphoserine is present on Ser63. Positions 80 to 224 (IIVFYGSQTG…DFITWREQFW (145 aa)) constitute a Flavodoxin-like domain. Residues 86-91 (SQTGTA), 138-141 (ATYG), 173-182 (LGNKTYEHFN), and Asp208 each bind FMN. Positions 279–521 (KNPFLAVVTT…YVRKSQFRLP (243 aa)) constitute an FAD-binding FR-type domain. NADP(+) is bound at residue Arg298. FAD contacts are provided by residues Arg424, 454 to 457 (RYYS), 472 to 474 (CAV), Tyr478, and 488 to 491 (GVAT). Residues Thr535, 596 to 597 (SR), 602 to 606 (KVYVQ), and Asp639 contribute to the NADP(+) site. FAD is bound at residue Trp677.

It belongs to the NADPH--cytochrome P450 reductase family. In the N-terminal section; belongs to the flavodoxin family. This sequence in the C-terminal section; belongs to the flavoprotein pyridine nucleotide cytochrome reductase family. FAD is required as a cofactor. It depends on FMN as a cofactor.

It is found in the endoplasmic reticulum membrane. It catalyses the reaction 2 oxidized [cytochrome P450] + NADPH = 2 reduced [cytochrome P450] + NADP(+) + H(+). Functionally, this enzyme is required for electron transfer from NADP to cytochrome P450 in microsomes. It can also provide electron transfer to heme oxygenase and cytochrome B5. The chain is NADPH--cytochrome P450 reductase from Bos taurus (Bovine).